Reading from the N-terminus, the 831-residue chain is MAMLPLFEPKGRVLLVDGHHLAYRTFFALKGLTTSRGEPVQAVYGFAKSLLKALKEDGDVVVVVFDAKAPSFRHEAYEAYKAGRAPTPEDFPRQLALIKELVDLLGLVRLEVPGFEADDVLATLAKRAEKEGYEVRILTADRDLYQLLSERIAILHPEGYLITPAWLYEKYGLRPEQWVDYRALAGDPSDNIPGVKGIGEKTAQRLIREWGSLENLFQHLDQVKPSLREKLQAGMEALALSRKLSQVHTDLPLEVDFGRRRTPNLEGLRAFLERLEFGSLLHEFGLLEGPKAAEEAPWPPPEGAFLGFSFSRPEPMWAELLALAGAWEGRLHRAQDPLRGLRDLKGVRGILAKDLAVLALREGLDLFPEDDPMLLAYLLDPSNTTPEGVARRYGGEWTEDAGERALLAERLFQTLKERLKGEERLLWLYEEVEKPLSRVLARMEATGVRLDVAYLQALSLEVEAEVRQLEEEVFRLAGHPFNLNSRDQLERVLFDELGLPAIGKTEKTGKRSTSAAVLEALREAHPIVDRILQYRELTKLKNTYIDPLPALVHPKTGRLHTRFNQTATATGRLSSSDPNLQNIPVRTPLGQRIRRAFVAEEGWVLVVLDYSQIELRVLAHLSGDENLIRVFQEGRDIHTQTASWMFGVSPEGVDPLMRRAAKTINFGVLYGMSAHRLSGELSIPYEEAVAFIERYFQSYPKVRAWIEGTLEEGRRRGYVETLFGRRRYVPDLNARVKSVREAAERMAFNMPVQGTAADLMKLAMVRLFPRLQELGARMLLQVHDELVLEAPKDRAERVAALAKEVMEGVWPLQVPLEVEVGLGEDWLSAKE.

The 5'-3' exonuclease domain occupies 174–258 (RPEQWVDYRA…TDLPLEVDFG (85 aa)). Positions 409-831 (ERLFQTLKER…LGEDWLSAKE (423 aa)) are polymerase.

Belongs to the DNA polymerase type-A family.

It catalyses the reaction DNA(n) + a 2'-deoxyribonucleoside 5'-triphosphate = DNA(n+1) + diphosphate. In addition to polymerase activity, this DNA polymerase exhibits 5'-3' exonuclease activity. This chain is DNA polymerase I, thermostable (polA), found in Thermus thermophilus.